A 710-amino-acid polypeptide reads, in one-letter code: Choline transporter-like protein 4 (710 aa).

The Cytoplasmic segment spans residues 1–34 (MGGKQRDEDDEAYGKPVKYDPSFRGPIKNRSCTD). Residues 35-55 (VICCVLFLLFILGYIVVGIVA) form a helical membrane-spanning segment. The Extracellular segment spans residues 56–229 (WLYGDPRQVL…KIFEDFAQSW (174 aa)). N69, N155, and N197 each carry an N-linked (GlcNAc...) asparagine glycan. The helical transmembrane segment at 230-250 (YWILVALGVALVLSLLFILLL) threads the bilayer. At 251-252 (RL) the chain is on the cytoplasmic side. The helical transmembrane segment at 253-273 (VAGPLVLVLILGVLGVLAYGI) threads the bilayer. At 274 to 309 (YYCWEEYRVLRDKGASISQLGFTTNLSAYQSVQETW) the chain is on the extracellular side. A glycan (N-linked (GlcNAc...) asparagine) is linked at N298. A helical membrane pass occupies residues 310–330 (LAALIVLAVLEAILLLMLIFL). Residues 331–358 (RQRIRIAIALLKEASKAVGQMMSTMFYP) lie on the Cytoplasmic side of the membrane. Residues 359–379 (LVTFVLLLICIAYWAMTALYL) traverse the membrane as a helical segment. Topologically, residues 380–455 (ATSGQPQYVL…GVLGLFWTLN (76 aa)) are extracellular. Residues N393, N405, and N416 are each glycosylated (N-linked (GlcNAc...) asparagine). The chain crosses the membrane as a helical span at residues 456 to 476 (WVLALGQCVLAGAFASFYWAF). Over 477 to 501 (HKPQDIPTFPLISAFIRTLRYHTGS) the chain is Cytoplasmic. Residues 502–522 (LAFGALILTLVQIARVILEYI) form a helical membrane-spanning segment. The Extracellular portion of the chain corresponds to 523–560 (DHKLRGVQNPVARCIMCCFKCCLWCLEKFIKFLNRNAY). The helical transmembrane segment at 561 to 581 (IMIAIYGKNFCVSAKNAFMLL) threads the bilayer. At 582 to 597 (MRNIVRVVVLDKVTDL) the chain is on the cytoplasmic side. The helical transmembrane segment at 598–618 (LLFFGKLLVVGGVGVLSFFFF) threads the bilayer. Topologically, residues 619-638 (SGRIPGLGKDFKSPHLNYYW) are extracellular. Residues 639-659 (LPIMTSILGAYVIASGFFSVF) form a helical membrane-spanning segment. Residues 660–710 (GMCVDTLFLCFLEDLERNNGSLDRPYYMSKSLLKILGKKNEAPPDNKKRKK) lie on the Cytoplasmic side of the membrane.

This sequence belongs to the CTL (choline transporter-like) family. In terms of processing, N-glycosylated; N-glycosylation of Asn-69, Asn-155 and Asn-393 is required for a proper thiamine pyrophosphate uptake. Highly expressed in colon, also detected in prostate, trachea and lung. Isoform 3 is also expressed in colon but a lower levels. As to expression, expressed in colon at low levels.

It is found in the membrane. The protein localises to the apical cell membrane. It carries out the reaction choline(out) + n H(+)(in) = choline(in) + n H(+)(out). The enzyme catalyses thiamine diphosphate(out) = thiamine diphosphate(in). Choline transporter that plays a role in the choline-acetylcholine system and is required to the efferent innervation of hair cells in the olivocochlear bundle for the maintenance of physiological function of outer hair cells and the protection of hair cells from acoustic injury. Also described as a thiamine pyrophosphate transporter in colon, may mediate the absorption of microbiota-generated thiamine pyrophosphate and contribute to host thiamine (vitamin B1) homeostasis. In terms of biological role, also has thiamine pyrophosphate transporter activity. The sequence is that of Choline transporter-like protein 4 from Homo sapiens (Human).